An 81-amino-acid chain; its full sequence is Large ribosomal subunit protein bL27 (81 aa).

Positions 1-11 (MATSKSGGSSK) are enriched in polar residues. Residues 1–23 (MATSKSGGSSKNGRDSISKRLGV) form a disordered region.

Belongs to the bacterial ribosomal protein bL27 family.

The polypeptide is Large ribosomal subunit protein bL27 (Borrelia garinii subsp. bavariensis (strain ATCC BAA-2496 / DSM 23469 / PBi) (Borreliella bavariensis)).